The following is a 79-amino-acid chain: Conotoxin TsMSGL-2 (79 aa).

Positions 1–24 are cleaved as a signal peptide; the sequence is MSGLGIMVLTLLLLVFMATSHQDA. Positions 25 to 46 are excised as a propeptide; it reads GEKQATQRDAVNVRRRRSIAGR. 3 disulfide bridges follow: Cys-52–Cys-64, Cys-56–Cys-73, and Cys-63–Cys-77. Leu-78 carries the post-translational modification Leucine amide.

This sequence belongs to the conotoxin O3 superfamily. As to expression, expressed by the venom duct.

The protein localises to the secreted. In Conus tessulatus (Tessellate cone), this protein is Conotoxin TsMSGL-2.